The primary structure comprises 529 residues: Cytochrome P450 monooxygenase ausG (529 aa).

The helical transmembrane segment at 31 to 51 threads the bilayer; sequence LLVVCGLPGLLLLFFVTAILL. Cys470 contacts heme.

It belongs to the cytochrome P450 family. Heme is required as a cofactor.

It is found in the membrane. It participates in secondary metabolite biosynthesis; terpenoid biosynthesis. Its function is as follows. Cytochrome P450 monooxygenase; part of the gene cluster that mediates the biosynthesis of calidodehydroaustin, a fungal meroterpenoid. The first step of the pathway is the synthesis of 3,5-dimethylorsellinic acid by the polyketide synthase ausA. 3,5-dimethylorsellinic acid is then prenylated by the polyprenyl transferase ausN. Further epoxidation by the FAD-dependent monooxygenase ausM and cyclization by the probable terpene cyclase ausL lead to the formation of protoaustinoid A. Protoaustinoid A is then oxidized to spiro-lactone preaustinoid A3 by the combined action of the FAD-binding monooxygenases ausB and ausC, and the dioxygenase ausE. Acid-catalyzed keto-rearrangement and ring contraction of the tetraketide portion of preaustinoid A3 by ausJ lead to the formation of preaustinoid A4. The aldo-keto reductase ausK, with the help of ausH, is involved in the next step by transforming preaustinoid A4 into isoaustinone which is in turn hydroxylated by the P450 monooxygenase ausI to form austinolide. The cytochrome P450 monooxygenase ausG modifies austinolide to austinol. Austinol is further acetylated to austin by the O-acetyltransferase ausP, which spontaneously changes to dehydroaustin. The cytochrome P450 monooxygenase ausR then converts dehydroaustin is into 7-dehydrodehydroaustin. The hydroxylation catalyzed by ausR permits the O-acetyltransferase ausQ to add an additional acetyl group to the molecule, leading to the formation of acetoxydehydroaustin. The short chain dehydrogenase ausT catalyzes the reduction of the double bond present between carbon atoms 1 and 2 to convert 7-dehydrodehydroaustin into 1,2-dihydro-7-hydroxydehydroaustin. AusQ catalyzes not only an acetylation reaction but also the addition of the PKS ausV diketide product to 1,2-dihydro-7-hydroxydehydroaustin, forming precalidodehydroaustin. Finally, the iron/alpha-ketoglutarate-dependent dioxygenase converts precalidodehydroaustin into calidodehydroaustin. This Aspergillus calidoustus protein is Cytochrome P450 monooxygenase ausG.